The primary structure comprises 372 residues: Heat shock 70 kDa protein II (372 aa).

This sequence belongs to the heat shock protein 70 family.

The polypeptide is Heat shock 70 kDa protein II (HSP70II) (Paracentrotus lividus (Common sea urchin)).